A 309-amino-acid polypeptide reads, in one-letter code: MNRLQVELPGLSLKNPIIPASGCFGFGREYAQFYDLSVLGSIMIKATTEQPRYGNPTPRVAETPGGMLNAIGLQNPGLEKVMNSELPFLEQFDLPIIANVAGSQAEDYVAVAKAISKAPNVHALELNISCPNVKTGGIAFGTNPEIAADLTKRVKEVSEVPVYVKLSPNVANIVEIAKAIENAGADGLTMINTLLGMRLDLKTAKPILANRTGGLSGPAIKPVALRMVHEVSQAVNIPIIGMGGIETAEDVIEFFYAGASAVAVGTANFIDPFVCPTIIEELPALLDELGFDHISECQGRSWKQTCHSR.

FMN-binding positions include S21 and 45 to 46; that span reads KA. Substrate-binding positions include K45 and 69–73; that span reads NAIGL. FMN is bound by residues N99 and N127. N127 contacts substrate. The active-site Nucleophile is the C130. Residues K165 and I191 each coordinate FMN. 192-193 lines the substrate pocket; that stretch reads NT. FMN contacts are provided by residues G217, 243–244, and 265–266; these read GG and GT.

This sequence belongs to the dihydroorotate dehydrogenase family. Type 1 subfamily. In terms of assembly, heterotetramer of 2 PyrK and 2 PyrD type B subunits. It depends on FMN as a cofactor.

It localises to the cytoplasm. It catalyses the reaction (S)-dihydroorotate + NAD(+) = orotate + NADH + H(+). Its pathway is pyrimidine metabolism; UMP biosynthesis via de novo pathway; orotate from (S)-dihydroorotate (NAD(+) route): step 1/1. Catalyzes the conversion of dihydroorotate to orotate with NAD(+) as electron acceptor. This chain is Dihydroorotate dehydrogenase B (NAD(+)), catalytic subunit (pyrD), found in Bacillus mycoides (strain KBAB4) (Bacillus weihenstephanensis).